We begin with the raw amino-acid sequence, 860 residues long: Eukaryotic translation initiation factor 3 subunit C (860 aa).

The segment at 1-79 (MSSRFFHGGS…ESDEEEDRVT (79 aa)) is disordered. Acidic residues-rich tracts occupy residues 16-53 (SSDEEELYSDRDEEEVSDEEEETTSEEESSEEESDDEA) and 67-76 (DLDESDEEED). The 175-residue stretch at 598–772 (FHMHINLELL…NAIVFRKGVE (175 aa)) folds into the PCI domain. Residues 808–860 (AFQRDQGPGGRLGRGQGRGGQRTAGGRPPIGGQQRRPGGQQFSGGALGGAIKA) are disordered. Positions 814–830 (GPGGRLGRGQGRGGQRT) are enriched in gly residues. Residues 831 to 847 (AGGRPPIGGQQRRPGGQ) show a composition bias toward low complexity. Residues 848-860 (QFSGGALGGAIKA) are compositionally biased toward gly residues.

The protein belongs to the eIF-3 subunit C family. Component of the eukaryotic translation initiation factor 3 (eIF-3) complex.

It is found in the cytoplasm. Its function is as follows. Component of the eukaryotic translation initiation factor 3 (eIF-3) complex, which is involved in protein synthesis of a specialized repertoire of mRNAs and, together with other initiation factors, stimulates binding of mRNA and methionyl-tRNAi to the 40S ribosome. The eIF-3 complex specifically targets and initiates translation of a subset of mRNAs involved in cell proliferation. The protein is Eukaryotic translation initiation factor 3 subunit C of Coccidioides immitis (strain RS) (Valley fever fungus).